The chain runs to 247 residues: Ribose-5-phosphate isomerase (247 aa).

It belongs to the ribose 5-phosphate isomerase family.

It localises to the cytoplasm. The enzyme catalyses aldehydo-D-ribose 5-phosphate = D-ribulose 5-phosphate. It functions in the pathway carbohydrate degradation; pentose phosphate pathway; D-ribose 5-phosphate from D-ribulose 5-phosphate (non-oxidative stage): step 1/1. This Meyerozyma guilliermondii (strain ATCC 6260 / CBS 566 / DSM 6381 / JCM 1539 / NBRC 10279 / NRRL Y-324) (Yeast) protein is Ribose-5-phosphate isomerase (RKI1).